Consider the following 285-residue polypeptide: Ribonuclease H1 (285 aa).

Positions 72–122 (RSSSSPDGSKGQESAHVQKLQVKTSKRPREPLGEEEEPPEPGAKHTRQDTE) are disordered. One can recognise an RNase H type-1 domain in the interval 135-281 (MGESVVVYTD…ADRLAREGAK (147 aa)). Mg(2+)-binding residues include aspartate 144, glutamate 185, aspartate 209, and aspartate 273.

This sequence belongs to the RNase H family. Monomer. Mg(2+) serves as cofactor.

It is found in the cytoplasm. The catalysed reaction is Endonucleolytic cleavage to 5'-phosphomonoester.. With respect to regulation, in the presence of magnesium, manganese is inhibitory. Endonuclease that specifically degrades the RNA of RNA-DNA hybrids. Plays a role in RNA polymerase II (RNAp II) transcription termination by degrading R-loop RNA-DNA hybrid formation at G-rich pause sites located downstream of the poly(A) site and behind the elongating RNAp II. The sequence is that of Ribonuclease H1 (Rnaseh1) from Rattus norvegicus (Rat).